The following is a 273-amino-acid chain: MSTRTDHYAVIGNPIAHSKSPDIHARFAAQTQQDLKYDRLLAPLDGFLASVQEFIRNDGKGLNVTVPFKLEAYAMASRLSERARAAGAVNTLKFENGEMLGDNTDGVGLVTDIVRNAGVAVAGKTVLLLGAGGAARGVILPLLHEKPARLVIANRTHSKALDLAERFAPQPTLEVSDFGALDDAFDIVINATAASLASEVPPISPRVFAKRTLAYDMMYGAAPTPFMQFAAEHGATVRDGLGMLVEQAAESFYVWRNVRPETAAVFKELRDKL.

Residues 18 to 20 (SKS) and T65 each bind shikimate. Catalysis depends on K69, which acts as the Proton acceptor. E81 serves as a coordination point for NADP(+). Shikimate is bound by residues N90 and D105. NADP(+)-binding positions include 130–134 (GAGGA), 154–159 (NRTHSK), and M217. Y219 contacts shikimate. G240 lines the NADP(+) pocket.

It belongs to the shikimate dehydrogenase family. In terms of assembly, homodimer.

It carries out the reaction shikimate + NADP(+) = 3-dehydroshikimate + NADPH + H(+). It participates in metabolic intermediate biosynthesis; chorismate biosynthesis; chorismate from D-erythrose 4-phosphate and phosphoenolpyruvate: step 4/7. Involved in the biosynthesis of the chorismate, which leads to the biosynthesis of aromatic amino acids. Catalyzes the reversible NADPH linked reduction of 3-dehydroshikimate (DHSA) to yield shikimate (SA). This is Shikimate dehydrogenase (NADP(+)) from Janthinobacterium sp. (strain Marseille) (Minibacterium massiliensis).